We begin with the raw amino-acid sequence, 1503 residues long: MMAKNKEPRPPSYTVSVVGLSGTEKDKGNCGVGKSCLCNRFVRSKADEYYPEHTSVLSTIDFGGRVVNNDHFLYWGDITQNGEDGVECKIHVIEQTEFIDDQTFLPHRSTNLQPYIKRAAASKLQSAEKLMYICTDQLGLEQDFEQKQMPEGKLNVDGFLLCIDVSQGCNRKFDDQLKFVNNLFVQLSKSKKPVIIAATKCDECVDHYLREVQAFASNKKNLLVVETSARFNVNIETCFTALVQMLDKTRGKPKIIPYLDAYKTQRQLVVTATDKFEKLVQTVRDYHATWKTVSNKLKNHPDYEEYINLEGTRKARNTFSKHIEQLKQEHIRKRREEYISTLPRAFNTLLPDLEEIEHLNWLEALKLMEKRADFQLCFVVLEKTPWDETDHIDKINDRRIPFDLLSTLEAEKVYQNHVQHLISEKRRIEMKEKFKKTLEKIQFISPGQPWEEVMCFVMEDEAFKYITEADSKEVYGRHQREIVEKAKEEFQEMLFEHSELFYDLDLNATPSSDKMSEIHTVLSEEPRYKALQKLAPDRESLLLKHIGFVYHPTKETCLSGQYCTDIKVENLLATSLLEMDHNRVRLYHDSTNIDKVNLFILGKDGLAQELANEIRTQSTDDEYALDGKIYELDLRPVDAKSPYILSQLWTAAFKPHGCFCVFNSIESLSFIGEFIGKIRTEASQIRKDKYMTNLPFTLILANQRDSISKNLPILRHQGQQLANKLQCPFVDVPTGTYPRKFNESQIKQALRGVLESVKHNLDVVSPVPINKDVSEADLRIVMCAMCGDPFSVDLILSPFLDSHSCSAAQAGQNNSLMLDKIIGEKRRRIQITILSYHSSIGVRKDELVHGYILVYSAKRKASMGMLRAFLSEVQDTIPVQLVAVTDSQADFFENEAIKELMTEGEHIATEITAKFTALYSLSQYHRQTEVFTLFFSDVLEKKNMIENSYLSDNTRESTHQSEDVFLPSPRDCFPYNNYPDSDDDTEAPPPYSPIGDDVQLLPTPSDRSRYRLDLEGNEYPVHSTPNCHDHERNHKVPPPIKPKPVVPKTNVKKLDPNLLKTIEAGIGKNPRKQTSRVPLAHPEDMDSSDNYVEPLDTIFKQKGYSDEIYVVPDDSQNRIIKIRNSFVNNTQGDEENGFSDRTSKGHGERRPSKYKYKSKTLFSKAKSYYRRTHSDASDDEAFTTSKTKRKGRHRGSEEDPLLSPVETWKGGIDNPAITSDQEVDDKKIKKKTHKVKEDKKQKKKTKTFNPPTRRNWESNYFGMPLQDLVTAEKPIPLFVEKCVEFIEDTGLCTEGLYRVSGNKTDQDNIQKQFDQDHNINLASMEVTVNAVAGALKAFFADLPDPLIPYSLHPELLEAAKIPDKTERFHALKEIVKKFHPVNYDVFRYVITHLNRVSQQNKINLMTADNLSICFWPTLMRPDFENREFLSTTKIHQSVVETFIQQCQFFFYNGEIVETANTVAPPPTSNPGQLVESMVPLQLPPPLQPQLIQPQLQTDPLGII.

FF domains follow at residues 267–325 (QLVV…HIEQ), 366–420 (KLME…HVQH), 427–481 (RIEM…HQRE), and 482–548 (IVEK…HIGF). 3'-nitrotyrosine is present on Tyr-550. A phosphoserine mark is found at Ser-590 and Ser-765. Positions 590-763 (STNIDKVNLF…LESVKHNLDV (174 aa)) constitute a pG1 pseudoGTPase domain. Residues 779–944 (RIVMCAMCGD…FSDVLEKKNM (166 aa)) form the pG2 pseudoGTPase domain. A phosphoserine mark is found at Ser-951 and Ser-968. 3 disordered regions span residues 975 to 1004 (YNNY…LPTP), 1022 to 1050 (HSTP…PKTN), and 1069 to 1091 (NPRK…SDNY). The segment covering 1036–1045 (VPPPIKPKPV) has biased composition (pro residues). Ser-1115 carries the phosphoserine modification. 2 disordered regions span residues 1129–1157 (NTQG…YKYK) and 1169–1255 (YRRT…TRRN). A compositionally biased stretch (basic and acidic residues) spans 1141–1151 (RTSKGHGERRP). A phosphoserine mark is found at Ser-1196, Ser-1203, and Ser-1219. Residues 1263-1450 (MPLQDLVTAE…TFIQQCQFFF (188 aa)) form the Rho-GAP domain.

As to quaternary structure, may interact with RASA1/p120GAP. As to expression, expressed in spinal cord, cerebellum, kidney, testis and lung.

It localises to the cytoplasm. It is found in the cell membrane. GTPase-activating protein for Rho family members. The protein is Rho GTPase-activating protein 5 (Arhgap5) of Mus musculus (Mouse).